A 522-amino-acid chain; its full sequence is Protein GDS1 (522 aa).

4 disordered regions span residues 56 to 88 (ALDD…PKKD), 222 to 268 (QQLE…SSNS), 300 to 391 (LSPS…SHNA), and 433 to 489 (STQT…SRNE). Residues 62-73 (LAGSSFSSSQEI) are compositionally biased toward polar residues. The span at 74 to 88 (KATKPKKDFGAPKKD) shows a compositional bias: basic and acidic residues. Composition is skewed to polar residues over residues 222–236 (QQLE…FNSN), 244–260 (SSNQ…SMTD), 300–314 (LSPS…LLTP), and 355–366 (SQSLSVLSTPKK). The span at 368–378 (SSASLSTFASS) shows a compositional bias: low complexity. Residues 379–391 (KNISPDSSLSHNA) are compositionally biased toward polar residues. Residues 439 to 467 (ESSSESSQYNSSSSSPVNSAAASSAESLS) are compositionally biased toward low complexity. Residues 468–489 (DINSSQDNGRESNPSSQESRNE) are compositionally biased toward polar residues.

In terms of biological role, involved in nuclear control of mitochondria. This chain is Protein GDS1 (GDS1), found in Saccharomyces cerevisiae (strain ATCC 204508 / S288c) (Baker's yeast).